The primary structure comprises 212 residues: ATP phosphoribosyltransferase (212 aa).

Belongs to the ATP phosphoribosyltransferase family. Short subfamily. Heteromultimer composed of HisG and HisZ subunits.

The protein localises to the cytoplasm. It catalyses the reaction 1-(5-phospho-beta-D-ribosyl)-ATP + diphosphate = 5-phospho-alpha-D-ribose 1-diphosphate + ATP. The protein operates within amino-acid biosynthesis; L-histidine biosynthesis; L-histidine from 5-phospho-alpha-D-ribose 1-diphosphate: step 1/9. In terms of biological role, catalyzes the condensation of ATP and 5-phosphoribose 1-diphosphate to form N'-(5'-phosphoribosyl)-ATP (PR-ATP). Has a crucial role in the pathway because the rate of histidine biosynthesis seems to be controlled primarily by regulation of HisG enzymatic activity. This chain is ATP phosphoribosyltransferase, found in Prochlorococcus marinus (strain MIT 9312).